Reading from the N-terminus, the 355-residue chain is Isopentenyl-diphosphate delta-isomerase (355 aa).

6-7 (RK) is a binding site for substrate. FMN is bound by residues 62–64 (AMT), serine 93, and asparagine 122. Glutamine 152 serves as a coordination point for substrate. Glutamate 153 contacts Mg(2+). Residues lysine 184, threonine 214, 258–259 (GG), and 280–281 (AG) contribute to the FMN site.

It belongs to the IPP isomerase type 2 family. In terms of assembly, homooctamer. Dimer of tetramers. It depends on FMN as a cofactor. Requires NADPH as cofactor. The cofactor is Mg(2+).

It localises to the cytoplasm. The enzyme catalyses isopentenyl diphosphate = dimethylallyl diphosphate. Involved in the biosynthesis of isoprenoids. Catalyzes the 1,3-allylic rearrangement of the homoallylic substrate isopentenyl (IPP) to its allylic isomer, dimethylallyl diphosphate (DMAPP). The chain is Isopentenyl-diphosphate delta-isomerase from Bacillus pumilus (strain SAFR-032).